Here is a 174-residue protein sequence, read N- to C-terminus: Probable calcium-binding protein CML20 (174 aa).

Residue glycine 2 is the site of N-myristoyl glycine attachment. A disordered region spans residues 14 to 35 (LRRSRSRSPPPAVLDPSQSPLS). 4 consecutive EF-hand domains span residues 39–74 (EAEP…SVDE), 75–100 (AEEM…AVME), 102–137 (GGLD…LNLD), and 141–174 (LTAE…SKQA). Ca(2+) contacts are provided by aspartate 52, aspartate 54, aspartate 56, glutamate 63, aspartate 83, aspartate 85, aspartate 87, glutamate 94, aspartate 115, aspartate 117, asparagine 119, glutamate 126, aspartate 154, aspartate 156, aspartate 158, and glutamate 165.

Its function is as follows. Potential calcium sensor. The protein is Probable calcium-binding protein CML20 (CML20) of Oryza sativa subsp. japonica (Rice).